The sequence spans 338 residues: Lipoate-protein ligase A (338 aa).

The BPL/LPL catalytic domain occupies 29–216 (PTTQRVLFLW…AFFDYFGEQC (188 aa)). ATP is bound by residues arginine 71, 76 to 79 (GAVF), and lysine 134. Lysine 134 provides a ligand contact to (R)-lipoate.

It belongs to the LplA family. In terms of assembly, monomer.

The protein resides in the cytoplasm. The enzyme catalyses L-lysyl-[lipoyl-carrier protein] + (R)-lipoate + ATP = N(6)-[(R)-lipoyl]-L-lysyl-[lipoyl-carrier protein] + AMP + diphosphate + H(+). It functions in the pathway protein modification; protein lipoylation via exogenous pathway; protein N(6)-(lipoyl)lysine from lipoate: step 1/2. Its pathway is protein modification; protein lipoylation via exogenous pathway; protein N(6)-(lipoyl)lysine from lipoate: step 2/2. In terms of biological role, catalyzes both the ATP-dependent activation of exogenously supplied lipoate to lipoyl-AMP and the transfer of the activated lipoyl onto the lipoyl domains of lipoate-dependent enzymes. In Pectobacterium carotovorum subsp. carotovorum (strain PC1), this protein is Lipoate-protein ligase A.